The following is a 150-amino-acid chain: Aspartate 1-decarboxylase 2 (150 aa).

Ser-24 acts as the Schiff-base intermediate with substrate; via pyruvic acid in catalysis. Ser-24 is modified (pyruvic acid (Ser)). Thr-56 serves as a coordination point for substrate. Tyr-57 serves as the catalytic Proton donor. Position 72 to 74 (72 to 74) interacts with substrate; sequence GAA.

Belongs to the PanD family. As to quaternary structure, heterooctamer of four alpha and four beta subunits. Requires pyruvate as cofactor. Post-translationally, is synthesized initially as an inactive proenzyme, which is activated by self-cleavage at a specific serine bond to produce a beta-subunit with a hydroxyl group at its C-terminus and an alpha-subunit with a pyruvoyl group at its N-terminus.

The protein resides in the cytoplasm. It catalyses the reaction L-aspartate + H(+) = beta-alanine + CO2. Its pathway is cofactor biosynthesis; (R)-pantothenate biosynthesis; beta-alanine from L-aspartate: step 1/1. Functionally, catalyzes the pyruvoyl-dependent decarboxylation of aspartate to produce beta-alanine. This chain is Aspartate 1-decarboxylase 2, found in Mesorhizobium japonicum (strain LMG 29417 / CECT 9101 / MAFF 303099) (Mesorhizobium loti (strain MAFF 303099)).